A 422-amino-acid chain; its full sequence is 2-oxoglutarate and iron-dependent oxygenase JMJD4 (422 aa).

The JmjC domain maps to 139-298 (QRNFPEHNIY…IMWQFLQDEL (160 aa)). Residues His186, Asp188, and His266 each contribute to the Fe cation site.

This sequence belongs to the JMJD6 family. The cofactor is Fe(2+).

Its subcellular location is the cytoplasm. The catalysed reaction is L-lysyl-[protein] + 2-oxoglutarate + O2 = 4-hydroxy-L-lysyl-[protein] + succinate + CO2. Catalyzes the 2-oxoglutarate and iron-dependent C4-lysyl hydroxylation of ETF1 at 'Lys-63' thereby promoting the translational termination efficiency of ETF1. This is 2-oxoglutarate and iron-dependent oxygenase JMJD4 (jmjd4) from Danio rerio (Zebrafish).